Here is a 256-residue protein sequence, read N- to C-terminus: Geranylgeranylglyceryl phosphate synthase (256 aa).

The Mg(2+) site is built by aspartate 28 and serine 53. Sn-glycerol 1-phosphate is bound by residues 172 to 178, 203 to 204, and 225 to 226; these read YLEAGSG, GG, and GT.

The protein belongs to the GGGP/HepGP synthase family. Group II subfamily. Mg(2+) serves as cofactor.

Its subcellular location is the cytoplasm. The enzyme catalyses sn-glycerol 1-phosphate + (2E,6E,10E)-geranylgeranyl diphosphate = sn-3-O-(geranylgeranyl)glycerol 1-phosphate + diphosphate. Its pathway is membrane lipid metabolism; glycerophospholipid metabolism. In terms of biological role, prenyltransferase that catalyzes the transfer of the geranylgeranyl moiety of geranylgeranyl diphosphate (GGPP) to the C3 hydroxyl of sn-glycerol-1-phosphate (G1P). This reaction is the first ether-bond-formation step in the biosynthesis of archaeal membrane lipids. This is Geranylgeranylglyceryl phosphate synthase from Methanococcus maripaludis (strain C7 / ATCC BAA-1331).